The following is a 204-amino-acid chain: Ribonuclease HII (204 aa).

The region spanning 1–197 (MILGIDEAGR…KNCILNPKLL (197 aa)) is the RNase H type-2 domain. The a divalent metal cation site is built by aspartate 6, glutamate 7, and aspartate 103.

This sequence belongs to the RNase HII family. It depends on Mn(2+) as a cofactor. Mg(2+) is required as a cofactor.

It localises to the cytoplasm. The catalysed reaction is Endonucleolytic cleavage to 5'-phosphomonoester.. Endonuclease that specifically degrades the RNA of RNA-DNA hybrids. In Helicobacter pylori (strain P12), this protein is Ribonuclease HII.